Here is a 430-residue protein sequence, read N- to C-terminus: Glutamate-1-semialdehyde 2,1-aminomutase (430 aa).

Position 268 is an N6-(pyridoxal phosphate)lysine (lysine 268).

The protein belongs to the class-III pyridoxal-phosphate-dependent aminotransferase family. HemL subfamily. As to quaternary structure, homodimer. Pyridoxal 5'-phosphate is required as a cofactor.

The protein resides in the cytoplasm. It catalyses the reaction (S)-4-amino-5-oxopentanoate = 5-aminolevulinate. The protein operates within porphyrin-containing compound metabolism; protoporphyrin-IX biosynthesis; 5-aminolevulinate from L-glutamyl-tRNA(Glu): step 2/2. The sequence is that of Glutamate-1-semialdehyde 2,1-aminomutase (hemL) from Bacillus subtilis (strain 168).